The primary structure comprises 376 residues: Alcohol dehydrogenase class-3 (376 aa).

Residue Ala-1 is modified to N-acetylalanine. Residues Cys-47, His-69, Cys-99, Cys-102, Cys-105, Cys-113, and Cys-176 each contribute to the Zn(2+) site.

This sequence belongs to the zinc-containing alcohol dehydrogenase family. Class-III subfamily. As to quaternary structure, homodimer. Zn(2+) is required as a cofactor.

The protein localises to the cytoplasm. The catalysed reaction is a primary alcohol + NAD(+) = an aldehyde + NADH + H(+). The enzyme catalyses a secondary alcohol + NAD(+) = a ketone + NADH + H(+). It catalyses the reaction S-(hydroxymethyl)glutathione + NADP(+) = S-formylglutathione + NADPH + H(+). It carries out the reaction S-(hydroxymethyl)glutathione + NAD(+) = S-formylglutathione + NADH + H(+). The catalysed reaction is S-nitrosoglutathione + NADH + H(+) = S-(hydroxysulfenamide)glutathione + NAD(+). In terms of biological role, class-III ADH is remarkably ineffective in oxidizing ethanol, but it readily catalyzes the oxidation of long-chain primary alcohols and the oxidation of S-(hydroxymethyl) glutathione. Also acts as a S-nitroso-glutathione reductase by catalyzing the NADH-dependent reduction of S-nitrosoglutathione, thereby regulating protein S-nitrosylation. This chain is Alcohol dehydrogenase class-3, found in Scyliorhinus canicula (Small-spotted catshark).